We begin with the raw amino-acid sequence, 964 residues long: Protein translocase subunit SecA (964 aa).

ATP is bound by residues Q86, G104–T108, and D494. The tract at residues E846–A964 is disordered. Residues A871–T882 are compositionally biased toward acidic residues. The segment covering A887–S900 has biased composition (low complexity). 4 residues coordinate Zn(2+): C947, C949, C958, and H959.

This sequence belongs to the SecA family. In terms of assembly, monomer and homodimer. Part of the essential Sec protein translocation apparatus which comprises SecA, SecYEG and auxiliary proteins SecDF. Other proteins may also be involved. It depends on Zn(2+) as a cofactor.

The protein resides in the cell membrane. Its subcellular location is the cytoplasm. The catalysed reaction is ATP + H2O + cellular proteinSide 1 = ADP + phosphate + cellular proteinSide 2.. In terms of biological role, part of the Sec protein translocase complex. Interacts with the SecYEG preprotein conducting channel. Has a central role in coupling the hydrolysis of ATP to the transfer of proteins into and across the cell membrane, serving as an ATP-driven molecular motor driving the stepwise translocation of polypeptide chains across the membrane. In Bifidobacterium longum subsp. infantis (strain ATCC 15697 / DSM 20088 / JCM 1222 / NCTC 11817 / S12), this protein is Protein translocase subunit SecA.